The chain runs to 276 residues: Shikimate dehydrogenase (NADP(+)) (276 aa).

Shikimate is bound by residues 18-20 (SKS) and threonine 65. Lysine 69 (proton acceptor) is an active-site residue. NADP(+) is bound at residue glutamate 81. Positions 90 and 106 each coordinate shikimate. NADP(+) is bound by residues 130–134 (GAGGA), 154–159 (NRTSSK), and methionine 217. Tyrosine 219 provides a ligand contact to shikimate. Glycine 241 serves as a coordination point for NADP(+).

The protein belongs to the shikimate dehydrogenase family. As to quaternary structure, homodimer.

It carries out the reaction shikimate + NADP(+) = 3-dehydroshikimate + NADPH + H(+). It participates in metabolic intermediate biosynthesis; chorismate biosynthesis; chorismate from D-erythrose 4-phosphate and phosphoenolpyruvate: step 4/7. Its function is as follows. Involved in the biosynthesis of the chorismate, which leads to the biosynthesis of aromatic amino acids. Catalyzes the reversible NADPH linked reduction of 3-dehydroshikimate (DHSA) to yield shikimate (SA). In Vibrio atlanticus (strain LGP32) (Vibrio splendidus (strain Mel32)), this protein is Shikimate dehydrogenase (NADP(+)).